Here is an 882-residue protein sequence, read N- to C-terminus: Alanine--tRNA ligase (882 aa).

Positions 570, 574, 672, and 676 each coordinate Zn(2+).

Belongs to the class-II aminoacyl-tRNA synthetase family. Zn(2+) serves as cofactor.

The protein resides in the cytoplasm. It carries out the reaction tRNA(Ala) + L-alanine + ATP = L-alanyl-tRNA(Ala) + AMP + diphosphate. In terms of biological role, catalyzes the attachment of alanine to tRNA(Ala) in a two-step reaction: alanine is first activated by ATP to form Ala-AMP and then transferred to the acceptor end of tRNA(Ala). Also edits incorrectly charged Ser-tRNA(Ala) and Gly-tRNA(Ala) via its editing domain. The protein is Alanine--tRNA ligase of Xanthomonas campestris pv. campestris (strain B100).